Here is a 293-residue protein sequence, read N- to C-terminus: MLVDLNVPWPQNSYADKVTSQAVNNLIKTLSTLHMLGYTHIAINFTVNHSEKFPNDVKLLNPIDIKRRFGELMDRTGLKLYSRITLIIDDPSKGQSLSKISQAFDIVAALPISEKGLTLSTTNLDIDLLTFQYGSRLPTFLKHKSICSCVNRGVKLEIVYGYALRDVQARRQFVSNVRSVIRSSRSRGIVIGSGAMSPLECRNILGVTSLIKNLGLPSDRCSKAMGDLASLVLLNGRLRNKSHKQTIVTGGGSGNGDDVVNDVQGIDDVQTIKVVKRSMDAEQLGHASKRHKP.

It belongs to the eukaryotic/archaeal RNase P protein component 3 family. In terms of assembly, component of nuclear RNase P and RNase MRP complexes. RNase P consists of an RNA moiety and at least 9 protein subunits including POP1, POP3, POP4, POP5, POP6, POP7, POP8, RPP1 and RPR2. RNase MRP complex consists of an RNA moiety and at least 10 protein subunits including POP1, POP3, POP4, POP5, POP6, POP7, POP8, RMP1, RPP1 and SNM1, many of which are shared with the RNase P complex.

The protein localises to the nucleus. It carries out the reaction Endonucleolytic cleavage of RNA, removing 5'-extranucleotides from tRNA precursor.. Functionally, component of ribonuclease P, a protein complex that generates mature tRNA molecules by cleaving their 5'-ends. Also a component of RNase MRP, which cleaves pre-rRNA sequences. The sequence is that of Ribonuclease P/MRP protein subunit RPP1 (RPP1) from Saccharomyces cerevisiae (strain ATCC 204508 / S288c) (Baker's yeast).